We begin with the raw amino-acid sequence, 470 residues long: Synaptotagmin-17 (470 aa).

Residues 54–112 are disordered; the sequence is PPWLMASRSNDKDGDSVHTASDVPLTPRTNSPDGRRSSSDTSKSTYSLTRRISSLDSRR. Low complexity predominate over residues 92 to 112; that stretch reads SDTSKSTYSLTRRISSLDSRR. Phosphoserine occurs at positions 114 and 115. C2 domains lie at 180–306 and 317–451; these read QLGM…HWWK and ELGE…EQWH.

Belongs to the synaptotagmin family.

The protein localises to the membrane. Functionally, plays a role in dendrite formation by melanocytes. This chain is Synaptotagmin-17 (Syt17), found in Mus musculus (Mouse).